Reading from the N-terminus, the 320-residue chain is Ribosomal protein L11 methyltransferase (320 aa).

S-adenosyl-L-methionine is bound by residues Thr165, Gly186, Asp208, and Asn251.

Belongs to the methyltransferase superfamily. PrmA family.

The protein localises to the cytoplasm. It carries out the reaction L-lysyl-[protein] + 3 S-adenosyl-L-methionine = N(6),N(6),N(6)-trimethyl-L-lysyl-[protein] + 3 S-adenosyl-L-homocysteine + 3 H(+). Functionally, methylates ribosomal protein L11. This Limosilactobacillus fermentum (strain NBRC 3956 / LMG 18251) (Lactobacillus fermentum) protein is Ribosomal protein L11 methyltransferase.